The primary structure comprises 250 residues: Small ribosomal subunit protein uS2 (250 aa).

It belongs to the universal ribosomal protein uS2 family.

The sequence is that of Small ribosomal subunit protein uS2 from Paraburkholderia phymatum (strain DSM 17167 / CIP 108236 / LMG 21445 / STM815) (Burkholderia phymatum).